We begin with the raw amino-acid sequence, 193 residues long: NADH-quinone oxidoreductase subunit B (193 aa).

[4Fe-4S] cluster contacts are provided by C72, C73, C137, and C167.

This sequence belongs to the complex I 20 kDa subunit family. NDH-1 is composed of 14 different subunits. Subunits NuoB, C, D, E, F, and G constitute the peripheral sector of the complex. Requires [4Fe-4S] cluster as cofactor.

It localises to the cell inner membrane. It carries out the reaction a quinone + NADH + 5 H(+)(in) = a quinol + NAD(+) + 4 H(+)(out). Its function is as follows. NDH-1 shuttles electrons from NADH, via FMN and iron-sulfur (Fe-S) centers, to quinones in the respiratory chain. Couples the redox reaction to proton translocation (for every two electrons transferred, four hydrogen ions are translocated across the cytoplasmic membrane), and thus conserves the redox energy in a proton gradient. The chain is NADH-quinone oxidoreductase subunit B from Brucella abortus (strain S19).